Here is a 1418-residue protein sequence, read N- to C-terminus: Protein ced-11 (1418 aa).

The next 7 helical transmembrane spans lie at 617-637 (FPIFLPKWAKICISAVLIIPV), 755-775 (YWLSLLFRIVFICCLAYSVVL), 782-802 (LWDTGMWVWSFFWWIENCFVL), 818-838 (VFDVFAFFVFLILLLVMKVFP), 856-876 (VVSAFFVLYVSYSTLFTYIPL), 898-918 (FLFMIALVMLSSAVAIQAVVF), and 986-1006 (IVIEYFVILKLLLWPILFAFF).

The protein resides in the membrane. Its function is as follows. Plays a major role in programmed cell death. The sequence is that of Protein ced-11 (ced-11) from Caenorhabditis elegans.